The chain runs to 328 residues: Serine/threonine protein kinase RdoA (328 aa).

Asp201 acts as the Proton acceptor in catalysis. Mg(2+)-binding residues include Asn206 and Asp217. Residue Asp217 is part of the active site.

Belongs to the SrkA/RdoA protein kinase family. In terms of assembly, monomer. Mg(2+) is required as a cofactor.

The protein resides in the cytoplasm. The catalysed reaction is L-seryl-[protein] + ATP = O-phospho-L-seryl-[protein] + ADP + H(+). The enzyme catalyses L-threonyl-[protein] + ATP = O-phospho-L-threonyl-[protein] + ADP + H(+). A protein kinase that (auto)phosphorylates on Ser and Thr residues, probably involved in the extracytoplasmic stress response. Probably acts to suppress the effects of stress linked to accumulation of reactive oxygen species. The sequence is that of Serine/threonine protein kinase RdoA from Salmonella typhimurium (strain LT2 / SGSC1412 / ATCC 700720).